Reading from the N-terminus, the 938-residue chain is Isoleucine--tRNA ligase (938 aa).

The 'HIGH' region motif lies at 58 to 68 (PYANGSIHIGH). Position 183 is an N6-acetyllysine (lysine 183). L-isoleucyl-5'-AMP is bound at residue glutamate 561. The short motif at 602–606 (KMSKS) is the 'KMSKS' region element. Lysine 605 contacts ATP. Zn(2+) is bound by residues cysteine 901, cysteine 904, cysteine 921, and cysteine 924.

It belongs to the class-I aminoacyl-tRNA synthetase family. IleS type 1 subfamily. As to quaternary structure, monomer. Zn(2+) is required as a cofactor.

It localises to the cytoplasm. It catalyses the reaction tRNA(Ile) + L-isoleucine + ATP = L-isoleucyl-tRNA(Ile) + AMP + diphosphate. Functionally, catalyzes the attachment of isoleucine to tRNA(Ile). As IleRS can inadvertently accommodate and process structurally similar amino acids such as valine, to avoid such errors it has two additional distinct tRNA(Ile)-dependent editing activities. One activity is designated as 'pretransfer' editing and involves the hydrolysis of activated Val-AMP. The other activity is designated 'posttransfer' editing and involves deacylation of mischarged Val-tRNA(Ile). This chain is Isoleucine--tRNA ligase, found in Escherichia coli (strain 55989 / EAEC).